The following is a 166-amino-acid chain: Zinc finger CCHC domain-containing protein 13 (166 aa).

The segment at 4-21 (KDFFACGHSGHWARGCPR) adopts a CCHC-type 1; degenerate zinc-finger fold. Residues 45–62 (YTCYCCGESGRNAKNCVL) form a CCHC-type 2; degenerate zinc finger. 4 consecutive CCHC-type zinc fingers follow at residues 65 to 82 (NICY…DCKD), 89 to 106 (QHCY…DCDR), 110 to 127 (QKCY…DCAQ), and 128 to 145 (VKCY…NCSK).

The chain is Zinc finger CCHC domain-containing protein 13 (ZCCHC13) from Homo sapiens (Human).